The primary structure comprises 142 residues: COA8 family protein Y39B6A.34, mitochondrial (142 aa).

Belongs to the COA8 family.

The protein resides in the mitochondrion inner membrane. Its function is as follows. May be required for cytochrome c complex (COX) assembly and function, COX being the terminal component of the mitochondrial respiratory chain. This chain is COA8 family protein Y39B6A.34, mitochondrial, found in Caenorhabditis elegans.